Reading from the N-terminus, the 962-residue chain is Protease 3 (962 aa).

A signal peptide spans 1–23 (MPRSTWFKALLLFVALWAPLSQA). H88 contributes to the Zn(2+) binding site. The active-site Proton acceptor is E91. Zn(2+)-binding residues include H92 and E169.

This sequence belongs to the peptidase M16 family. In terms of assembly, monomer. Requires Zn(2+) as cofactor.

It is found in the periplasm. It catalyses the reaction Preferential cleavage of 16-Tyr-|-Leu-17 and 25-Phe-|-Tyr-26 bonds of oxidized insulin B chain. Also acts on other substrates of Mw less than 7 kDa such as insulin and glucagon.. Endopeptidase that degrades small peptides of less than 7 kDa, such as glucagon and insulin. This Shigella flexneri protein is Protease 3 (ptrA).